Here is a 449-residue protein sequence, read N- to C-terminus: Probable phosphoglucosamine mutase (449 aa).

The Phosphoserine intermediate role is filled by serine 96. Residues serine 96, aspartate 233, aspartate 235, and aspartate 237 each contribute to the Mg(2+) site. Serine 96 carries the post-translational modification Phosphoserine.

It belongs to the phosphohexose mutase family. Mg(2+) serves as cofactor. Activated by phosphorylation.

It carries out the reaction alpha-D-glucosamine 1-phosphate = D-glucosamine 6-phosphate. Catalyzes the conversion of glucosamine-6-phosphate to glucosamine-1-phosphate. This chain is Probable phosphoglucosamine mutase, found in Thermococcus gammatolerans (strain DSM 15229 / JCM 11827 / EJ3).